The following is a 309-amino-acid chain: S-antigen protein (309 aa).

Positions 1–23 (MNRILSVSFYLFFLYLYIYKTYG) are cleaved as a signal peptide. The tract at residues 52 to 309 (GKGNKYEDLQ…KSIMNMLILM (258 aa)) is disordered. Residues 60 to 86 (LQEEGEGENDDEEHSNSEESDNDEENE) show a composition bias toward acidic residues. A compositionally biased stretch (basic and acidic residues) spans 93–259 (EAPKSDEAEA…DEAEARKSEA (167 aa)). Residues 97–256 (SDEAEALKSD…RKSDEAEARK (160 aa)) form a 20 X 8 AA approximate tandem repeats of A-[RL]-K-S-D-E-A-E region. 2 consecutive repeat copies span residues 257-271 (SEAGTEGPKGTGGPG) and 272-286 (SEAGTEGPKGTGGPG). The interval 257-286 (SEAGTEGPKGTGGPGSEAGTEGPKGTGGPG) is 2 X 15 AA tandem repeats of S-E-A-G-T-E-G-P-K-G-T-G-G-P-G. Positions 263-289 (GPKGTGGPGSEAGTEGPKGTGGPGSGG) are enriched in gly residues.

It is found in the parasitophorous vacuole. In terms of biological role, s antigens are soluble heat-stable proteins present in the sera of some infected individuals. This chain is S-antigen protein, found in Plasmodium falciparum (isolate NF7 / Ghana).